The chain runs to 344 residues: uncharacterized protein (344 aa).

Transmembrane regions (helical) follow at residues 53 to 73 (FVVG…VSVW), 84 to 104 (WPIL…GYNI), 153 to 173 (IYPL…LYLL), 189 to 209 (FGAW…LEML), and 275 to 295 (IASE…VGVF).

The protein belongs to the steroid 5-alpha reductase family.

It localises to the endoplasmic reticulum membrane. This is an uncharacterized protein from Schizosaccharomyces pombe (strain 972 / ATCC 24843) (Fission yeast).